Reading from the N-terminus, the 1221-residue chain is DNA-directed RNA polymerase subunit beta (1221 aa).

The tract at residues 1176–1221 (EKKKLAEEEAEIAAEAEAEGSAEEDAAEADADANEAETADDDKASK) is disordered. A compositionally biased stretch (acidic residues) spans 1183-1215 (EEAEIAAEAEAEGSAEEDAAEADADANEAETAD).

Belongs to the RNA polymerase beta chain family. In terms of assembly, the RNAP catalytic core consists of 2 alpha, 1 beta, 1 beta' and 1 omega subunit. When a sigma factor is associated with the core the holoenzyme is formed, which can initiate transcription.

The catalysed reaction is RNA(n) + a ribonucleoside 5'-triphosphate = RNA(n+1) + diphosphate. DNA-dependent RNA polymerase catalyzes the transcription of DNA into RNA using the four ribonucleoside triphosphates as substrates. The sequence is that of DNA-directed RNA polymerase subunit beta from Lactobacillus delbrueckii subsp. bulgaricus (strain ATCC BAA-365 / Lb-18).